The sequence spans 309 residues: D-allose kinase (309 aa).

ATP contacts are provided by residues Gly-10 to His-17 and Gly-142 to Met-149.

Belongs to the ROK (NagC/XylR) family.

It carries out the reaction D-allose + ATP = D-allose 6-phosphate + ADP + H(+). The protein operates within carbohydrate degradation; D-allose degradation. Catalyzes the phosphorylation of D-allose to D-allose 6-phosphate. Also has low level glucokinase activity in vitro. The sequence is that of D-allose kinase from Escherichia coli (strain K12).